We begin with the raw amino-acid sequence, 348 residues long: UDP-glucose 4-epimerase (348 aa).

Residues G12–I14, D33–N37, D66–I67, F88, and K92 each bind NAD(+). Position 132–134 (S132–T134) interacts with substrate. Y157 functions as the Proton acceptor in the catalytic mechanism. NAD(+)-binding residues include K161 and Y185. Substrate contacts are provided by residues Y185–N187, N206–L208, N224–F226, R239, and R300–D303.

The protein belongs to the NAD(P)-dependent epimerase/dehydratase family. As to quaternary structure, homodimer. NAD(+) is required as a cofactor.

It catalyses the reaction UDP-alpha-D-glucose = UDP-alpha-D-galactose. The enzyme catalyses UDP-N-acetyl-alpha-D-glucosamine = UDP-N-acetyl-alpha-D-galactosamine. The protein operates within carbohydrate metabolism; galactose metabolism. Functionally, catalyzes two distinct but analogous reactions: the reversible epimerization of UDP-glucose to UDP-galactose and the reversible epimerization of UDP-N-acetylglucosamine to UDP-N-acetylgalactosamine. The reaction with UDP-Gal plays a critical role in the Leloir pathway of galactose catabolism in which galactose is converted to the glycolytic intermediate glucose 6-phosphate. It contributes to the catabolism of dietary galactose and enables the endogenous biosynthesis of both UDP-Gal and UDP-GalNAc when exogenous sources are limited. Both UDP-sugar interconversions are important in the synthesis of glycoproteins and glycolipids. The protein is UDP-glucose 4-epimerase of Bos taurus (Bovine).